The following is a 213-amino-acid chain: MSGAAPAPQDDEPRIGPNAILQTIGVLDRHLGRAERDRVMRLAGVPVPPPDSGMLPESQCRAVHQALRVDQGEAAEGLLWLSGLATGDYILANRIPGFAKAIIRVLPGFLGARLLAAAITKHAWTFVGSGRFRVESFRPLTFRIDDNPLRADAAERPSCFWHAAVFERLFGTLVWPEVTVEEISCASVSGGPCLFVLHPKGKKTAMPSSVHSG.

Its pathway is porphyrin-containing compound metabolism; bacteriochlorophyll biosynthesis (light-independent). This chain is Bacteriochlorophyll synthase 23 kDa chain (bchJ), found in Rhodobacter capsulatus (strain ATCC BAA-309 / NBRC 16581 / SB1003).